A 70-amino-acid polypeptide reads, in one-letter code: Protein tam14 (70 aa).

The span at 1 to 19 shows a compositional bias: polar residues; it reads MPTVQTPSQRRANTQFQKN. The segment at 1–20 is disordered; the sequence is MPTVQTPSQRRANTQFQKNI. The helical transmembrane segment at 45–65 threads the bilayer; it reads IAMFFILLMSGGIILGILRFL.

It belongs to the RAMP4 family.

The protein resides in the membrane. The protein localises to the endoplasmic reticulum membrane. Its function is as follows. Interacts with target proteins during their translocation into the lumen of the endoplasmic reticulum. Protects unfolded target proteins against degradation during ER stress. May facilitate glycosylation of target proteins after termination of ER stress. This is Protein tam14 (tam14) from Schizosaccharomyces pombe (strain 972 / ATCC 24843) (Fission yeast).